Here is a 656-residue protein sequence, read N- to C-terminus: CXXC-type zinc finger protein 1 (656 aa).

M1 carries the N-acetylmethionine modification. Acidic residues predominate over residues 1 to 14 (MEGDGSDPEPPDAG). The disordered stretch occupies residues 1 to 20 (MEGDGSDPEPPDAGEDSKSE). Phosphoserine occurs at positions 6 and 19. A PHD-type zinc finger spans residues 28–76 (YCICRKPDINCFMIGCDNCNEWFHGDCIRITEKMAKAIREWYCRECREK). Residues 84 to 162 (YRHKKSRERD…QHHQQQQQQI (79 aa)) form a disordered region. Residues 90-120 (RERDGNERDSSEPRDEGGGRKRPVPDPDLQR) show a composition bias toward basic and acidic residues. S124 bears the Phosphoserine mark. A CXXC-type zinc finger spans residues 160 to 209 (QQIKRSARMCGECEACRRTEDCGHCDFCRDMKKFGGPNKIRQKCRLRQCQ). Zn(2+) contacts are provided by C169, C172, C175, C181, C184, C187, C203, and C208. Disordered regions lie at residues 219 to 287 (FPSS…LPLD) and 311 to 373 (EESP…ASLP). S224 carries the post-translational modification Phosphoserine. T227 carries the post-translational modification Phosphothreonine. Over residues 239-249 (LPTQQQPQPSQ) the composition is skewed to low complexity. K250 is covalently cross-linked (Glycyl lysine isopeptide (Lys-Gly) (interchain with G-Cter in SUMO2)). Over residues 321–334 (RKRAVKVKHVKRRE) the composition is skewed to basic residues. Residues 335–345 (KKSEKKKEERY) show a composition bias toward basic and acidic residues. Residues 346–358 (KRHRQKQKHKDKW) show a composition bias toward basic residues. Basic and acidic residues predominate over residues 359–368 (KHPERADAKD). Residues 422 to 474 (AEEHGKKLLERIRREQQSARTRLQEMERRFHELEAIILRAKQQAVREDEESNE) adopt a coiled-coil conformation.

In terms of assembly, component of the SET1 complex, at least composed of the catalytic subunit (SETD1A or SETD1B), WDR5, WDR82, RBBP5, ASH2L/ASH2, CXXC1/CFP1 HCFC1 and DPY30. Interacts with SETD1A. Interacts with ZNF335. Interacts with PRDM9; this interaction does not link PRDM9-activated recombination hotspot sites with DSB machinery and is not required for the hotspot recognition pathway. Interacts with histone H3K4me3. Post-translationally, may be regulated by proteolysis. As to expression, ubiquitous.

It localises to the nucleus speckle. It is found in the nucleus. Its function is as follows. Transcriptional activator that exhibits a unique DNA binding specificity for CpG unmethylated motifs with a preference for CpGG. This chain is CXXC-type zinc finger protein 1 (CXXC1), found in Homo sapiens (Human).